The chain runs to 314 residues: 3'-5' exoribonuclease YhaM (314 aa).

The 117-residue stretch at 163-279 (HVVSMLDLAK…LHYIDNLDAK (117 aa)) folds into the HD domain.

It belongs to the YhaM family.

Functionally, shows a 3'-5' exoribonuclease activity. This Bacillus cereus (strain AH187) protein is 3'-5' exoribonuclease YhaM.